Here is a 549-residue protein sequence, read N- to C-terminus: Glucose-6-phosphate isomerase (549 aa).

E353 acts as the Proton donor in catalysis. Active-site residues include H384 and K510. Positions 523 to 549 (AEPPAAQSDSSTDALVRRYRSERGRTA) are disordered. Basic and acidic residues predominate over residues 537–549 (LVRRYRSERGRTA).

The protein belongs to the GPI family.

It localises to the cytoplasm. It catalyses the reaction alpha-D-glucose 6-phosphate = beta-D-fructose 6-phosphate. The protein operates within carbohydrate biosynthesis; gluconeogenesis. It functions in the pathway carbohydrate degradation; glycolysis; D-glyceraldehyde 3-phosphate and glycerone phosphate from D-glucose: step 2/4. Functionally, catalyzes the reversible isomerization of glucose-6-phosphate to fructose-6-phosphate. This Mycolicibacterium gilvum (strain PYR-GCK) (Mycobacterium gilvum (strain PYR-GCK)) protein is Glucose-6-phosphate isomerase.